A 62-amino-acid polypeptide reads, in one-letter code: Large ribosomal subunit protein bL28 (62 aa).

Residues 1–23 (MGKQCYVTGRKASTGNRRSHALN) form a disordered region.

The protein belongs to the bacterial ribosomal protein bL28 family.

In Staphylococcus carnosus (strain TM300), this protein is Large ribosomal subunit protein bL28.